A 472-amino-acid chain; its full sequence is MPQTPTLVAMFDSSSFHRNLYQSKEESCSELYYQDNNLLSGSLEALIQHLVPNVDYYPDRTYIFTFLLSSRLFIHPSELMARVCHVCMEQQRLNEPGLDKSQVRKIAPKILQLLTEWTETFPYDFRDERMMRNLKDTAHRITNGDEMYRKNVQQIIQNLIRKLASLTQYEELITKINAQSTDRMTVLKTKPQSIQRDIITVCSDPYTVAQQLTHIELERLSYIGPEEFVQAFVQKDPLDNNENCYSDRKKPRNLEAYVEWFNRLSYLVATEICMPVKKKHRARMIEFFIDVARECFNIGNFNSLMAIISGMNMSPVSRLKKTWAKVKTAKFDILEHQMDPSSNFYNYRTALRGAAQRSLTAHSNREKIVIPFCSLLIKDIYFLNEGCTSRLPNGHVNFEKFWELAKQVSEFMTWKQVECPFEKDRKILHYVLTAPIFSEDALYLASYESEGPENHIEKDRWKTLRSALLGRA.

In terms of domain architecture, N-terminal Ras-GEF spans 34-164; that stretch reads QDNNLLSGSL…IIQNLIRKLA (131 aa). The region spanning 204 to 452 is the Ras-GEF domain; sequence DPYTVAQQLT…YLASYESEGP (249 aa).

Its function is as follows. Guanine nucleotide exchange factor (GEF) with specificity for rap2a and other Ras family proteins (in vitro). This is Ras-GEF domain-containing family member 1B (rasgef1b) from Xenopus tropicalis (Western clawed frog).